A 132-amino-acid chain; its full sequence is Pre-histone-like nucleoprotein (132 aa).

Positions 2-23 are excised as a propeptide; sequence AILISPSNNTGWGLGTHKLFGG. Positions 124–132 match the Nuclear localization signal motif; it reads RRKRRVRSK.

It belongs to the adenoviridae histone-like nucleoprotein family. In terms of assembly, interacts with the core-capsid bridging protein; this interaction bridges the virus core to the capsid. Interacts with host NPM1; this interaction might play a role in placing the pre-histone-like nucleoprotein on the viral DNA or regulating viral gene expression. Interacts with host HMGB1; this interaction inhibits host immune response. Cleaved near the N-terminus by the viral protease during virion maturation to form the mature protein.

The protein resides in the virion. The protein localises to the host nucleus. It localises to the host nucleolus. Its function is as follows. Plays a role in the inhibition of host immune response within the nucleus. Interacts with cellular nucleosomes and immobilizes the host immune danger signal HMGB1 on chromatin. In turn, prevents HMGB1 release out of the cell and thus decreases inflammation. Also plays a role in the wrapping and condensation of the viral DNA. May also promote viral genome import into the nucleus. This is Pre-histone-like nucleoprotein from Canine adenovirus serotype 1 (strain CLL) (CAdV-1).